A 751-amino-acid chain; its full sequence is Catalase-peroxidase (751 aa).

The segment at Met1 to Asp21 is disordered. Positions Trp90–Tyr244 form a cross-link, tryptophyl-tyrosyl-methioninium (Trp-Tyr) (with M-270). His91 (proton acceptor) is an active-site residue. Residues Tyr195–Ala227 form a disordered region. Basic and acidic residues predominate over residues Pro214–Ala227. Residues Tyr244–Met270 constitute a cross-link (tryptophyl-tyrosyl-methioninium (Tyr-Met) (with W-90)). His285 provides a ligand contact to heme b. The segment at Gly364–Pro385 is disordered.

The protein belongs to the peroxidase family. Peroxidase/catalase subfamily. Homodimer or homotetramer. Requires heme b as cofactor. In terms of processing, formation of the three residue Trp-Tyr-Met cross-link is important for the catalase, but not the peroxidase activity of the enzyme.

The catalysed reaction is H2O2 + AH2 = A + 2 H2O. The enzyme catalyses 2 H2O2 = O2 + 2 H2O. Bifunctional enzyme with both catalase and broad-spectrum peroxidase activity. This chain is Catalase-peroxidase, found in Pseudomonas putida (strain ATCC 47054 / DSM 6125 / CFBP 8728 / NCIMB 11950 / KT2440).